The following is a 382-amino-acid chain: Innexin-8 (382 aa).

A run of 4 helical transmembrane segments spans residues 29–49 (LITA…TYVG), 103–123 (QWSS…KFLW), 187–207 (VIKI…AIFL), and 270–290 (IFLF…IAHF).

It belongs to the pannexin family.

It localises to the cell membrane. It is found in the cell junction. The protein localises to the gap junction. Its function is as follows. Structural component of the gap junctions. This chain is Innexin-8 (inx-8), found in Caenorhabditis elegans.